A 25-amino-acid chain; its full sequence is Zinc metalloproteinase-disintegrin-like daborhagin-M (25 aa).

The 12-residue stretch at 14–25 (SYVELIITVDHS) folds into the Peptidase M12B domain. Position 17 (E17) interacts with Ca(2+).

The protein belongs to the venom metalloproteinase (M12B) family. P-III subfamily. P-IIIa sub-subfamily. In terms of assembly, monomer. The cofactor is Zn(2+). In terms of processing, N-glycosylated. Contains 16 disulfide bonds. As to expression, expressed by the venom gland.

Its subcellular location is the secreted. Inhibited by EDTA, EGTA and 1,10-phenanthroline. Addition of Mg(2+) or Ca(2+) increases the casein hydrolysis rate. Its function is as follows. Snake venom zinc metalloprotease that possesses high hemorrhagic activity (minimum hemorrhagic dose, MHD=0.86 ug) when subcutaneously injected into mice. Has potent fibrinogenolytic activity on alpha-chain of fibrinogen (FGA). Hydrolyzes model substrate (beta-chain of insulin) at Ala(14)-Leu(15) and Tyr(16)-Leu(17) followed by His(10)-Leu(11) and Phe(24)-Phe(25). In Daboia siamensis (Eastern Russel's viper), this protein is Zinc metalloproteinase-disintegrin-like daborhagin-M.